Consider the following 448-residue polypeptide: Clusterin (448 aa).

Residues 1–21 form the signal peptide; the sequence is MKILLLCVALLLIWDNGMVLG. The Nuclear localization signal signature appears at 77–80; sequence KKKK. Cystine bridges form between cysteine 101–cysteine 312, cysteine 112–cysteine 304, cysteine 115–cysteine 301, cysteine 120–cysteine 294, and cysteine 128–cysteine 284. A glycan (N-linked (GlcNAc...) asparagine) is linked at asparagine 102. Serine 132 carries the phosphoserine modification. 5 N-linked (GlcNAc...) asparagine glycosylation sites follow: asparagine 144, asparagine 290, asparagine 327, asparagine 353, and asparagine 373. At serine 395 the chain carries Phosphoserine. The short motif at 442-446 is the Nuclear localization signal element; that stretch reads RRKSR.

This sequence belongs to the clusterin family. In terms of assembly, antiparallel disulfide-linked heterodimer of an alpha chain and a beta chain. Self-associates and forms higher oligomers. Interacts with a broad range of misfolded proteins, including APP, APOC2 and LYZ. Slightly acidic pH promotes interaction with misfolded proteins. Forms high-molecular weight oligomers upon interaction with misfolded proteins. Interacts with APOA1, LRP2, CLUAP1 and PON1. Interacts with the complement membrane attack complex. Interacts (via alpha chain) with XRCC6. Interacts with SYVN1, COMMD1, BTRC, CUL1 and with ubiquitin and SCF (SKP1-CUL1-F-box protein) E3 ubiquitin-protein ligase complexes. Interacts (via alpha chain) with BAX in stressed cells, where BAX undergoes a conformation change leading to association with the mitochondrial membrane. Does not interact with BAX in unstressed cells. Found in a complex with LTF, CLU, EPPIN and SEMG1. Interacts (immaturely glycosylated pre-secreted form) with HSPA5; this interaction promotes CLU stability and facilitates stress-induced CLU retrotranslocation from the secretory pathway to the mitochondria, thereby reducing stress-induced apoptosis by stabilizing mitochondrial membrane integrity. Interacts with BCL2L1; this interaction releases and activates BAX and promotes cell death. Interacts with TGFBR2 and ACVR1. Interacts (secreted form) with STMN3; this interaction may act as an important modulator during neuronal differentiation. Interacts with VLDLR and LRP8. Post-translationally, proteolytically cleaved on its way through the secretory system, probably within the Golgi lumen. Proteolytic cleavage is not necessary for its chaperone activity. All non-secreted forms are not proteolytically cleaved. Chaperone activity of uncleaved forms is dependent on a non-reducing environment. In terms of processing, polyubiquitinated, leading to proteasomal degradation. Under cellular stress, the intracellular level of cleaved form is reduced due to proteasomal degradation. Extensively glycosylated with sulfated N-linked carbohydrates. About 30% of the protein mass is comprised of complex N-linked carbohydrate. Endoplasmic reticulum (ER) stress induces changes in glycosylation status and increases level of hypoglycosylated forms. Core carbohydrates are essential for chaperone activity. Non-secreted forms are hypoglycosylated or unglycosylated. Most abundant in stomach, liver, brain, and testis, with intermediate levels in heart, ovary and kidney.

Its subcellular location is the secreted. The protein resides in the nucleus. It is found in the cytoplasm. It localises to the mitochondrion membrane. The protein localises to the cytosol. Its subcellular location is the microsome. The protein resides in the endoplasmic reticulum. It is found in the mitochondrion. It localises to the perinuclear region. The protein localises to the cytoplasmic vesicle. Its subcellular location is the secretory vesicle. The protein resides in the chromaffin granule. Functionally, functions as extracellular chaperone that prevents aggregation of non native proteins. Prevents stress-induced aggregation of blood plasma proteins. Inhibits formation of amyloid fibrils by APP, APOC2, B2M, CALCA, CSN3, SNCA and aggregation-prone LYZ variants (in vitro). Does not require ATP. Maintains partially unfolded proteins in a state appropriate for subsequent refolding by other chaperones, such as HSPA8/HSC70. Does not refold proteins by itself. Binding to cell surface receptors triggers internalization of the chaperone-client complex and subsequent lysosomal or proteasomal degradation. When secreted, protects cells against apoptosis and against cytolysis by complement: inhibits assembly of the complement membrane attack complex (MAC) by preventing polymerization of C9 pore component of the MAC complex. Intracellular forms interact with ubiquitin and SCF (SKP1-CUL1-F-box protein) E3 ubiquitin-protein ligase complexes and promote the ubiquitination and subsequent proteasomal degradation of target proteins. Promotes proteasomal degradation of COMMD1 and IKBKB. Modulates NF-kappa-B transcriptional activity. Following stress, promotes apoptosis. Inhibits apoptosis when associated with the mitochondrial membrane by interference with BAX-dependent release of cytochrome c into the cytoplasm. Plays a role in the regulation of cell proliferation. Following ER stress, suppresses stress-induced apoptosis by stabilizing mitochondrial membrane integrity through interaction with HSPA5. When secreted, does not affect caspase or BAX-mediated intrinsic apoptosis and TNF-induced NF-kappa-B-activity. When secreted, acts as an important modulator during neuronal differentiation through interaction with STMN3. Plays a role in the clearance of immune complexes that arise during cell injury. This is Clusterin from Mus musculus (Mouse).